Reading from the N-terminus, the 89-residue chain is Small ribosomal subunit protein uS15 (89 aa).

Belongs to the universal ribosomal protein uS15 family. Part of the 30S ribosomal subunit. Forms a bridge to the 50S subunit in the 70S ribosome, contacting the 23S rRNA.

One of the primary rRNA binding proteins, it binds directly to 16S rRNA where it helps nucleate assembly of the platform of the 30S subunit by binding and bridging several RNA helices of the 16S rRNA. In terms of biological role, forms an intersubunit bridge (bridge B4) with the 23S rRNA of the 50S subunit in the ribosome. The protein is Small ribosomal subunit protein uS15 of Kocuria rhizophila (strain ATCC 9341 / DSM 348 / NBRC 103217 / DC2201).